The sequence spans 144 residues: Putative lipoprotein MAH_0816 (144 aa).

An N-terminal signal peptide occupies residues 1-24 (MRWPMQNRTTAVIAVALATTALVA). Residue Cys25 is the site of N-palmitoyl cysteine attachment. Cys25 carries S-diacylglycerol cysteine lipidation.

It belongs to the mycobacterial 19 kDa antigen family.

The protein resides in the cell membrane. The protein is Putative lipoprotein MAH_0816 of Mycobacterium avium subsp. hominissuis (strain TH135).